Consider the following 511-residue polypeptide: Maturase K (511 aa).

Belongs to the intron maturase 2 family. MatK subfamily.

Its subcellular location is the plastid. The protein resides in the chloroplast. In terms of biological role, usually encoded in the trnK tRNA gene intron. Probably assists in splicing its own and other chloroplast group II introns. The chain is Maturase K from Psathyrostachys juncea (Russian wildrye).